The following is a 1873-amino-acid chain: Ankyrin repeat domain-containing protein 31 (1873 aa).

Disordered regions lie at residues 1–27 (MEEG…SDLE) and 361–380 (EPLS…DQET). Residues 361 to 379 (EPLSNKRNSNSVTNSSDQE) are compositionally biased toward polar residues. ANK repeat units lie at residues 488 to 517 (FGEN…NVNQ), 521 to 550 (AGWT…DVNI), and 554 to 583 (YQIT…DPLF). Residues 707-740 (TGLRKGNLHNVKDPNTNVPKGIGRRKTQHKRTQV) are disordered. Residues 728–737 (IGRRKTQHKR) are compositionally biased toward basic residues. ANK repeat units follow at residues 1154-1183 (RGES…DVNL), 1187-1216 (AGWT…KVNC), and 1220-1249 (DGIL…NPNQ). 4 disordered regions span residues 1242–1263 (QNGA…EADD), 1449–1482 (RSEI…SGSM), 1512–1549 (FSGN…PSQP), and 1606–1634 (CDQD…ASES). Basic and acidic residues predominate over residues 1250–1263 (KDQKQKSALDEADD). 2 stretches are compositionally biased toward polar residues: residues 1460 to 1482 (ELTS…SGSM) and 1515 to 1525 (NDMNSKQNGSD). Residues 1535–1544 (RHSDGTEKNK) show a composition bias toward basic and acidic residues. Polar residues predominate over residues 1621–1632 (KTSSQQSPTGAS). An RAMA domain is found at 1683-1778 (KKALNYSTAP…TYLGKELLRY (96 aa)).

In terms of assembly, interacts with REC114; the interaction is direct. Interacts with IHO1.

Its subcellular location is the nucleus. The protein resides in the chromosome. Its function is as follows. Required for DNA double-strand breaks (DSBs) formation during meiotic recombination. Regulates the spatial and temporal patterns of pre-DSB recombinosome assembly and recombination activity by acting as a scaffold that anchors REC114 and other factors to specific genomic locations, thereby regulating DSB formation. Plays a key role in recombination in the pseudoautosomal regions of sex chromosomes. The protein is Ankyrin repeat domain-containing protein 31 of Homo sapiens (Human).